The sequence spans 195 residues: Large ribosomal subunit protein uL18 (195 aa).

The protein belongs to the universal ribosomal protein uL18 family. Part of the 50S ribosomal subunit. Contacts the 5S and 23S rRNAs.

This is one of the proteins that bind and probably mediate the attachment of the 5S RNA into the large ribosomal subunit, where it forms part of the central protuberance. The chain is Large ribosomal subunit protein uL18 from Korarchaeum cryptofilum (strain OPF8).